The primary structure comprises 586 residues: CTP synthase (586 aa).

The segment at 1 to 278 (MRKHPQTATK…DAFVVRRLNL (278 aa)) is amidoligase domain. Ser-20 lines the CTP pocket. Ser-20 contacts UTP. Residues 21–26 (SLGKGL) and Asp-78 contribute to the ATP site. Mg(2+)-binding residues include Asp-78 and Glu-152. CTP-binding positions include 159 to 161 (DIE), 199 to 204 (KTKPTQ), and Lys-235. Residues 199–204 (KTKPTQ) and Lys-235 each bind UTP. The Glutamine amidotransferase type-1 domain maps to 303–551 (RIALVGKYVE…VGAAIDYKAG (249 aa)). L-glutamine is bound at residue Gly-366. Cys-393 (nucleophile; for glutamine hydrolysis) is an active-site residue. Residues 394 to 397 (LGLQ), Glu-416, and Arg-477 each bind L-glutamine. Catalysis depends on residues His-524 and Glu-526. The segment at 560–586 (EIPEHTPNGSSHRDGVGQPLPEPASRG) is disordered.

Belongs to the CTP synthase family. Homotetramer.

The enzyme catalyses UTP + L-glutamine + ATP + H2O = CTP + L-glutamate + ADP + phosphate + 2 H(+). It catalyses the reaction L-glutamine + H2O = L-glutamate + NH4(+). It carries out the reaction UTP + NH4(+) + ATP = CTP + ADP + phosphate + 2 H(+). It functions in the pathway pyrimidine metabolism; CTP biosynthesis via de novo pathway; CTP from UDP: step 2/2. Its activity is regulated as follows. Allosterically activated by GTP, when glutamine is the substrate; GTP has no effect on the reaction when ammonia is the substrate. The allosteric effector GTP functions by stabilizing the protein conformation that binds the tetrahedral intermediate(s) formed during glutamine hydrolysis. Inhibited by the product CTP, via allosteric rather than competitive inhibition. In terms of biological role, catalyzes the ATP-dependent amination of UTP to CTP with either L-glutamine or ammonia as the source of nitrogen. Regulates intracellular CTP levels through interactions with the four ribonucleotide triphosphates. This Mycobacterium tuberculosis (strain CDC 1551 / Oshkosh) protein is CTP synthase.